The following is a 239-amino-acid chain: Splicing factor U2AF 35 kDa subunit (239 aa).

Ala-2 is subject to N-acetylalanine. A C3H1-type 1 zinc finger spans residues Glu-12–Pro-40. Position 39 is an N6-methyllysine (Lys-39). Phosphoserine is present on residues Ser-61 and Ser-145. In terms of domain architecture, RRM spans Leu-65–Val-147. The segment at Asp-149–Pro-176 adopts a C3H1-type 2 zinc-finger fold. At Arg-165 the chain carries Omega-N-methylarginine. The interval Arg-183–Phe-239 is disordered. The segment covering Arg-188–Asp-208 has biased composition (basic residues). A compositionally biased stretch (gly residues) spans Gly-212–Gly-221. Residues Gly-222–Phe-239 show a composition bias toward basic and acidic residues.

This sequence belongs to the splicing factor SR family. As to quaternary structure, identified in the spliceosome C complex. Heterodimer with U2AF2. Interacts (via RS domain) with PHF5A (via N-terminus). Interacts with ZRANB2. Interacts with SDE2. Interacts with SF3B1. Expressed in primary spermatocytes and elongating spermatids (at protein level).

The protein resides in the nucleus. It localises to the nucleus speckle. Its function is as follows. Plays a critical role in both constitutive and enhancer-dependent splicing by mediating protein-protein interactions and protein-RNA interactions required for accurate 3'-splice site selection. Recruits U2 snRNP to the branch point. Directly mediates interactions between U2AF2 and proteins bound to the enhancers and thus may function as a bridge between U2AF2 and the enhancer complex to recruit it to the adjacent intron. In Mus musculus (Mouse), this protein is Splicing factor U2AF 35 kDa subunit (U2af1).